Reading from the N-terminus, the 250-residue chain is Ubiquinone/menaquinone biosynthesis C-methyltransferase UbiE (250 aa).

Residues S73, D94, and 122-123 (NA) each bind S-adenosyl-L-methionine.

This sequence belongs to the class I-like SAM-binding methyltransferase superfamily. MenG/UbiE family.

It catalyses the reaction a 2-demethylmenaquinol + S-adenosyl-L-methionine = a menaquinol + S-adenosyl-L-homocysteine + H(+). The catalysed reaction is a 2-methoxy-6-(all-trans-polyprenyl)benzene-1,4-diol + S-adenosyl-L-methionine = a 5-methoxy-2-methyl-3-(all-trans-polyprenyl)benzene-1,4-diol + S-adenosyl-L-homocysteine + H(+). Its pathway is quinol/quinone metabolism; menaquinone biosynthesis; menaquinol from 1,4-dihydroxy-2-naphthoate: step 2/2. The protein operates within cofactor biosynthesis; ubiquinone biosynthesis. In terms of biological role, methyltransferase required for the conversion of demethylmenaquinol (DMKH2) to menaquinol (MKH2) and the conversion of 2-polyprenyl-6-methoxy-1,4-benzoquinol (DDMQH2) to 2-polyprenyl-3-methyl-6-methoxy-1,4-benzoquinol (DMQH2). This is Ubiquinone/menaquinone biosynthesis C-methyltransferase UbiE from Legionella pneumophila (strain Corby).